A 1482-amino-acid chain; its full sequence is Lysine-specific demethylase rbr-2 (1482 aa).

Residues 1-45 form a disordered region; it reads MRGRRQEDIATTSSAPSTSTSHKKKTVSSNGSFRPRTQSNPGGKM. Positions 11–20 are enriched in low complexity; the sequence is TTSSAPSTST. The segment covering 30–41 has biased composition (polar residues); sequence NGSFRPRTQSNP. Residues 61–102 enclose the JmjN domain; the sequence is APVYYPTSEEFADPIEYVAKIRPDAERYGVVKIVPPSDFKPP. Residues 126-223 enclose the ARID domain; the sequence is VKEKHTFIER…HIEPFNRNLK (98 aa). The disordered stretch occupies residues 244–316; sequence YQHHHGTMRS…SKTEEDEEEN (73 aa). Over residues 251-264 the composition is skewed to basic and acidic residues; that stretch reads MRSEPENTDGKNTE. The span at 277-288 shows a compositional bias: basic residues; it reads GRRRSKNKKPVP. Residues 322-374 form a PHD-type 1 zinc finger; that stretch reads QVYCVSCNEGKDEDLLLLCDIEGCNSGRHTYCCDPVLDEVPEGEWRCPKCIES. Residues 471 to 637 enclose the JmjC domain; that stretch reads QYANHAWNLN…KGRECVQSYS (167 aa). Residues His-517, Asp-520, and His-605 each coordinate Fe cation. Residues 1206-1260 form a PHD-type 2 zinc finger; the sequence is LEGCCCLGGNKSDSSESVLSCIMCESQFHVRCCEWSTFFQHLPKGCFMCVRCLRG. Positions 1361–1403 are disordered; it reads QQRPVKSKPSASLFDPKLNSKRKRPNPSQKDSSKSKSRKRQGQ. Residues 1416-1471 form a PHD-type 3 zinc finger; sequence FKSCQARSCLKPFGDSVNWVMCDAGCKNWFHVICVGFTLREINDMHEYRCSSCLDH.

Belongs to the JARID1 histone demethylase family. It depends on Fe(2+) as a cofactor.

The protein resides in the nucleus. It catalyses the reaction N(6),N(6),N(6)-trimethyl-L-lysyl(4)-[histone H3] + 3 2-oxoglutarate + 3 O2 = L-lysyl(4)-[histone H3] + 3 formaldehyde + 3 succinate + 3 CO2. In terms of biological role, histone demethylase that specifically demethylates 'Lys-4' of histone H3, thereby playing a central role in histone code. Does not demethylate histone H3 'Lys-9', H3 'Lys-27', H3 'Lys-36', H3 'Lys-79' or H4 'Lys-20'. Demethylates trimethylated and dimethylated but not monomethylated H3 'Lys-4'. Involved in larval development and vulva formation. The chain is Lysine-specific demethylase rbr-2 (rbr-2) from Caenorhabditis briggsae.